We begin with the raw amino-acid sequence, 170 residues long: MARIGLYPGTFDPMTNGHLDIIRRGLKLVDHLIVAIGVNATKTPLLTLEERFQLIEQEAGPIAKELGSKISTASFSGLVVNAADEHGATVILRGLRGAVDFEYETQMVGMNRVMNPHVETVFLAASPDTQFISSTLVRQIAGMDGDISPFVPPHVKAKVLARVAEQKKSR.

Residue T10 participates in substrate binding. ATP contacts are provided by residues 10 to 11 and H18; that span reads TF. Substrate-binding residues include K42, V79, and R93. Residues 94–96, E104, and 129–135 contribute to the ATP site; these read GLR and TQFISST.

This sequence belongs to the bacterial CoaD family. As to quaternary structure, homohexamer. Mg(2+) serves as cofactor.

The protein resides in the cytoplasm. It carries out the reaction (R)-4'-phosphopantetheine + ATP + H(+) = 3'-dephospho-CoA + diphosphate. It functions in the pathway cofactor biosynthesis; coenzyme A biosynthesis; CoA from (R)-pantothenate: step 4/5. Reversibly transfers an adenylyl group from ATP to 4'-phosphopantetheine, yielding dephospho-CoA (dPCoA) and pyrophosphate. The sequence is that of Phosphopantetheine adenylyltransferase from Parvibaculum lavamentivorans (strain DS-1 / DSM 13023 / NCIMB 13966).